A 423-amino-acid chain; its full sequence is Imidazolonepropionase (423 aa).

The Fe(3+) site is built by His87 and His89. His87 and His89 together coordinate Zn(2+). Arg96, Tyr159, and His192 together coordinate 4-imidazolone-5-propanoate. Position 159 (Tyr159) interacts with N-formimidoyl-L-glutamate. His257 contributes to the Fe(3+) binding site. His257 provides a ligand contact to Zn(2+). Residue Glu260 participates in 4-imidazolone-5-propanoate binding. Asp331 is a Fe(3+) binding site. A Zn(2+)-binding site is contributed by Asp331. N-formimidoyl-L-glutamate is bound by residues Asn333 and Gly335. Ser336 is a 4-imidazolone-5-propanoate binding site.

The protein belongs to the metallo-dependent hydrolases superfamily. HutI family. Requires Zn(2+) as cofactor. It depends on Fe(3+) as a cofactor.

Its subcellular location is the cytoplasm. The catalysed reaction is 4-imidazolone-5-propanoate + H2O = N-formimidoyl-L-glutamate. It participates in amino-acid degradation; L-histidine degradation into L-glutamate; N-formimidoyl-L-glutamate from L-histidine: step 3/3. Its function is as follows. Catalyzes the hydrolytic cleavage of the carbon-nitrogen bond in imidazolone-5-propanoate to yield N-formimidoyl-L-glutamate. It is the third step in the universal histidine degradation pathway. The chain is Imidazolonepropionase from Porphyromonas gingivalis (strain ATCC BAA-308 / W83).